Consider the following 396-residue polypeptide: Tryptophan synthase beta chain (396 aa).

The residue at position 86 (K86) is an N6-(pyridoxal phosphate)lysine.

This sequence belongs to the TrpB family. As to quaternary structure, tetramer of two alpha and two beta chains. It depends on pyridoxal 5'-phosphate as a cofactor.

It carries out the reaction (1S,2R)-1-C-(indol-3-yl)glycerol 3-phosphate + L-serine = D-glyceraldehyde 3-phosphate + L-tryptophan + H2O. The protein operates within amino-acid biosynthesis; L-tryptophan biosynthesis; L-tryptophan from chorismate: step 5/5. Its function is as follows. The beta subunit is responsible for the synthesis of L-tryptophan from indole and L-serine. In Yersinia enterocolitica serotype O:8 / biotype 1B (strain NCTC 13174 / 8081), this protein is Tryptophan synthase beta chain.